A 180-amino-acid chain; its full sequence is Large ribosomal subunit protein uL5 (180 aa).

Belongs to the universal ribosomal protein uL5 family. In terms of assembly, part of the 50S ribosomal subunit; part of the 5S rRNA/L5/L18/L25 subcomplex. Contacts the 5S rRNA and the P site tRNA. Forms a bridge to the 30S subunit in the 70S ribosome.

Functionally, this is one of the proteins that bind and probably mediate the attachment of the 5S RNA into the large ribosomal subunit, where it forms part of the central protuberance. In the 70S ribosome it contacts protein S13 of the 30S subunit (bridge B1b), connecting the 2 subunits; this bridge is implicated in subunit movement. Contacts the P site tRNA; the 5S rRNA and some of its associated proteins might help stabilize positioning of ribosome-bound tRNAs. The sequence is that of Large ribosomal subunit protein uL5 from Chlamydia trachomatis serovar A (strain ATCC VR-571B / DSM 19440 / HAR-13).